Reading from the N-terminus, the 211-residue chain is Formate dehydrogenase, cytochrome b556(fdo) subunit (211 aa).

The Cytoplasmic portion of the chain corresponds to 1 to 17 (MKRRDTIVRYTAPERIN). His18 provides a ligand contact to heme b. Residues 18–32 (HWITAFCFILAAVSG) traverse the membrane as a helical segment. Residues 33–53 (LGFLFPSFNWLMQIMGTPQLA) are Periplasmic-facing. A helical membrane pass occupies residues 54–72 (RILHPFVGVVMFASFIIMF). His57 lines the heme b pocket. Topologically, residues 73-112 (FRYWHHNLINRDDIFWAKNIRKIVVNEEVGDTGRYNFGQK) are cytoplasmic. Residues 113–130 (CVFWAAIIFLVLLLVSGV) form a helical membrane-spanning segment. The Periplasmic portion of the chain corresponds to 131-151 (IIWRPYFAPAFSIPVIRFALM). Residues 152 to 170 (LHSFAAVALIVVIMVHIYA) form a helical membrane-spanning segment. Heme b-binding residues include His153 and His167. The Cytoplasmic segment spans residues 171-211 (ALWVKGTITAMVEGWVTSAWAKKHHPRWYREVRKTTEKKAE).

The protein belongs to the formate dehydrogenase gamma subunit family. In terms of assembly, formate dehydrogenase is a membrane-bound complex, formed by subunits alpha, beta and gamma. The cofactor is heme.

Its subcellular location is the cell inner membrane. Allows to use formate as major electron donor during aerobic respiration. Subunit gamma is probably the cytochrome b556(FDO) component of the formate dehydrogenase. This chain is Formate dehydrogenase, cytochrome b556(fdo) subunit (fdoI), found in Escherichia coli O157:H7.